The following is a 414-amino-acid chain: Enolase (414 aa).

Glutamine 162 provides a ligand contact to (2R)-2-phosphoglycerate. Glutamate 204 serves as the catalytic Proton donor. 3 residues coordinate Mg(2+): aspartate 239, glutamate 280, and aspartate 307. The (2R)-2-phosphoglycerate site is built by lysine 332, arginine 361, serine 362, and lysine 383. The active-site Proton acceptor is the lysine 332.

The protein belongs to the enolase family. Requires Mg(2+) as cofactor.

It localises to the cytoplasm. It is found in the secreted. The protein resides in the cell surface. The enzyme catalyses (2R)-2-phosphoglycerate = phosphoenolpyruvate + H2O. It participates in carbohydrate degradation; glycolysis; pyruvate from D-glyceraldehyde 3-phosphate: step 4/5. In terms of biological role, catalyzes the reversible conversion of 2-phosphoglycerate (2-PG) into phosphoenolpyruvate (PEP). It is essential for the degradation of carbohydrates via glycolysis. This chain is Enolase, found in Campylobacter jejuni subsp. jejuni serotype O:6 (strain 81116 / NCTC 11828).